The primary structure comprises 635 residues: Biosynthetic arginine decarboxylase (635 aa).

Lys-100 carries the post-translational modification N6-(pyridoxal phosphate)lysine. 282-292 (VDIGGGLGVDY) is a binding site for substrate.

It belongs to the Orn/Lys/Arg decarboxylase class-II family. SpeA subfamily. Requires Mg(2+) as cofactor. Pyridoxal 5'-phosphate serves as cofactor.

The enzyme catalyses L-arginine + H(+) = agmatine + CO2. It functions in the pathway amine and polyamine biosynthesis; agmatine biosynthesis; agmatine from L-arginine: step 1/1. In terms of biological role, catalyzes the biosynthesis of agmatine from arginine. The polypeptide is Biosynthetic arginine decarboxylase (Geotalea daltonii (strain DSM 22248 / JCM 15807 / FRC-32) (Geobacter daltonii)).